The following is a 1346-amino-acid chain: MKSPRRTTLCLMFIVIYSSKAALNWNYESTIHPLSLHEHEPAGEEALRQKRAVATKSPTAEEYTVNIEISFENASFLDPIKAYLNSLSFPIHGNNTDQITDILSINVTTVCRPAGNEIWCSCETGYGWPRERCLHNLICQERDVFLPGHHCSCLKELPPNGPFCLLQEDVTLNMRVRLNVGFQEDLMNTSSALYRSYKTDLETAFRKGYGILPGFKGVTVTGFKSGSVVVTYEVKTTPPSLELIHKANEQVVQSLNQTYKMDYNSFQAVTINESNFFVTPEIIFEGDTVSLVCEKEVLSSNVSWRYEEQQLEIQNSSRFSIYTALFNNMTSVSKLTIHNITPGDAGEYVCKLILDIFEYECKKKIDVMPIQILANEEMKVMCDNNPVSLNCCSQGNVNWSKVEWKQEGKINIPGTPETDIDSSCSRYTLKADGTQCPSGSSGTTVIYTCEFISAYGARGSANIKVTFISVANLTITPDPISVSEGQNFSIKCISDVSNYDEVYWNTSAGIKIYQRFYTTRRYLDGAESVLTVKTSTREWNGTYHCIFRYKNSYSIATKDVIVHPLPLKLNIMVDPLEATVSCSGSHHIKCCIEEDGDYKVTFHTGSSSLPAAKEVNKKQVCYKHNFNASSVSWCSKTVDVCCHFTNAANNSVWSPSMKLNLVPGENITCQDPVIGVGEPGKVIQKLCRFSNVPSSPESPIGGTITYKCVGSQWEEKRNDCISAPINSLLQMAKALIKSPSQDEMLPTYLKDLSISIDKAEHEISSSPGSLGAIINILDLLSTVPTQVNSEMMTHVLSTVNVILGKPVLNTWKVLQQQWTNQSSQLLHSVERFSQALQSGDSPPLSFSQTNVQMSSMVIKSSHPETYQQRFVFPYFDLWGNVVIDKSYLENLQSDSSIVTMAFPTLQAILAQDIQENNFAESLVMTTTVSHNTTMPFRISMTFKNNSPSGGETKCVFWNFRLANNTGGWDSSGCYVEEGDGDNVTCICDHLTSFSILMSPDSPDPSSLLGILLDIISYVGVGFSILSLAACLVVEAVVWKSVTKNRTSYMRHTCIVNIAASLLVANTWFIVVAAIQDNRYILCKTACVAATFFIHFFYLSVFFWMLTLGLMLFYRLVFILHETSRSTQKAIAFCLGYGCPLAISVITLGATQPREVYTRKNVCWLNWEDTKALLAFAIPALIIVVVNITITIVVITKILRPSIGDKPCKQEKSSLFQISKSIGVLTPLLGLTWGFGLTTVFPGTNLVFHIIFAILNVFQGLFILLFGCLWDLKVQEALLNKFSLSRWSSQHSKSTSLGSSTPVFSMSSPISRRFNNLFGKTGTYNVSTPEATSSSLENSSSASSLLN.

The first 21 residues, Met1–Ala21, serve as a signal peptide directing secretion. Over Ala22–Ser1006 the chain is Extracellular. Asn73, Asn94, Asn106, Asn188, Asn256, Asn272, Asn301, Asn315, Asn328, Asn398, Asn472, Asn487, Asn505, Asn540, Asn627, Asn649, Asn666, Asn820, Asn931, Asn963, and Asn982 each carry an N-linked (GlcNAc...) asparagine glycan. Positions Leu166–Glu273 constitute an SEA domain. Ig-like domains are found at residues Gln267–Met368, Pro369–Thr466, and Ala471–Ile561. 2 disulfide bridges follow: Cys293/Cys350 and Cys391/Cys449. A disulfide bond links Cys492 and Cys545. The 162-residue stretch at Pro842–Asp1003 folds into the GAIN-B domain. Cystine bridges form between Cys954-Cys985 and Cys973-Cys987. The tract at residues Cys954–Asp1003 is GPS. The tethered agonist stretch occupies residues Thr991–Ser1006. Residues Leu1007 to Leu1027 traverse the membrane as a helical segment. Topologically, residues Ala1028–Cys1053 are cytoplasmic. The helical transmembrane segment at Ile1054 to Ile1074 threads the bilayer. At Gln1075 to Thr1090 the chain is on the extracellular side. Residues Phe1091–Leu1111 traverse the membrane as a helical segment. At Phe1112–Lys1128 the chain is on the cytoplasmic side. The helical transmembrane segment at Ala1129–Ala1149 threads the bilayer. Residues Thr1150 to Leu1173 lie on the Extracellular side of the membrane. A helical transmembrane segment spans residues Ala1174 to Ile1194. At Thr1195–Ser1220 the chain is on the cytoplasmic side. A helical membrane pass occupies residues Ile1221–Pro1241. At Gly1242–Asn1244 the chain is on the extracellular side. A helical membrane pass occupies residues Leu1245–Phe1265. The Cytoplasmic portion of the chain corresponds to Gly1266–Asn1346. Thr1300 is subject to Phosphothreonine. Ser1307 carries the post-translational modification Phosphoserine. The tract at residues Thr1327–Asn1346 is disordered. Over residues Glu1329 to Asn1346 the composition is skewed to low complexity.

This sequence belongs to the G-protein coupled receptor 2 family. Adhesion G-protein coupled receptor (ADGR) subfamily. In terms of assembly, homodimer; disulfide-linked. Heterodimer of 2 chains generated by proteolytic processing; the large extracellular N-terminal fragment and the membrane-bound C-terminal fragment predominantly remain associated and non-covalently linked. Fragment generates by the processing enzyme furin remains attached to the extracellular N-terminal fragment. Interacts (via N-terminal extracellular domain) with SFTPD. In terms of processing, highly glycosylated. Post-translationally, proteolytically cleaved at multiple sites: one in the GPS region of the GAIN-B domain (S1 site) and the other in the SEA domain (S2 site). The proteolytic cleavage at S1 site generates an extracellular subunit and a seven-transmembrane subunit. The proteolytic cleavage at S2 site generates a fragment that undergoes proteolytic cleavage by the processing enzyme furin. In terms of tissue distribution, expressed in lung endothelial cells and in alveolar type II (ATII) cells (at protein level). Expressed high levels in subcutaneous adipose tissue in lean individuals and at lower levels in visceral fat. Expression levels in subcutaneous adipose tissue drastically drop in obese individuals.

Its subcellular location is the cell membrane. With respect to regulation, as an adhesion G protein-coupled receptor (aGPCR) exhibits a large N-terminal extracellular domain containing highly conserved GPCR autoproteolysis-inducing (GAIN) domain. During synthesis, intracellular autoproteolytic processing of nascent chain within the GAIN domain generates a mature protein, consisting of an N-terminal fragment that is non-covalently linked to the C-terminal fragment. The mature protein is routed to the plasma membrane where the N- and C-terminal fragments remain associated, forming the holoreceptor. Dissociation of the aGPCR fragments stimulates G protein signaling through the action of the tethered-peptide agonist stalk that is occluded within the GAIN domain in the holoreceptor form. This dissociation might be induced by ligand binding, such as that of sFNDC4. In terms of biological role, adhesion G protein-coupled receptor. In alveolar type II (ATII or AT2) cells, required for normal lung surfactant homeostasis. Modulation of both surfactant secretion and uptake by ATII cells is mediated by the downstream activation of GNAQ/GNA11 proteins and may be a consequence of increased cortical F-actin assembly induced by ADGRF5 activation. In the kidney, may play a role in the regulation of acid excretion into the primary urine, possibly by regulating the surface expression of V-ATPase proton pump. As a receptor for soluble FNDC4 (sFNDC4), required for proper systemic glucose tolerance, specifically sensitizing white adipose tissue to insulin. Also plays a role in sFNDC4-induced decrease of local inflammation in white adipose tissue. The protein is Adhesion G protein-coupled receptor F5 of Homo sapiens (Human).